Reading from the N-terminus, the 233-residue chain is 7-cyano-7-deazaguanine synthase (233 aa).

8–18 (FSGGQDSTTCL) contacts ATP. Residues cysteine 188, cysteine 197, cysteine 200, and cysteine 203 each contribute to the Zn(2+) site.

The protein belongs to the QueC family. The cofactor is Zn(2+).

The catalysed reaction is 7-carboxy-7-deazaguanine + NH4(+) + ATP = 7-cyano-7-deazaguanine + ADP + phosphate + H2O + H(+). It functions in the pathway purine metabolism; 7-cyano-7-deazaguanine biosynthesis. Catalyzes the ATP-dependent conversion of 7-carboxy-7-deazaguanine (CDG) to 7-cyano-7-deazaguanine (preQ(0)). The chain is 7-cyano-7-deazaguanine synthase from Klebsiella pneumoniae (strain 342).